A 352-amino-acid chain; its full sequence is Phenylalanine--tRNA ligase alpha subunit (352 aa).

Residue glutamate 258 participates in Mg(2+) binding.

Belongs to the class-II aminoacyl-tRNA synthetase family. Phe-tRNA synthetase alpha subunit type 1 subfamily. Tetramer of two alpha and two beta subunits. Mg(2+) is required as a cofactor.

Its subcellular location is the cytoplasm. The enzyme catalyses tRNA(Phe) + L-phenylalanine + ATP = L-phenylalanyl-tRNA(Phe) + AMP + diphosphate + H(+). In Staphylococcus haemolyticus (strain JCSC1435), this protein is Phenylalanine--tRNA ligase alpha subunit.